Here is a 251-residue protein sequence, read N- to C-terminus: L-ascorbate peroxidase 2, cytosolic (251 aa).

Catalysis depends on His-43, which acts as the Proton acceptor. A disordered region spans residues 113–137 (EVPFHPGRQDKPEPPPEGRLPDATQ). Over residues 119–132 (GRQDKPEPPPEGRL) the composition is skewed to basic and acidic residues. A heme b-binding site is contributed by His-164. 5 residues coordinate K(+): Thr-165, Thr-181, Asn-183, Ile-186, and Asp-188.

Belongs to the peroxidase family. Ascorbate peroxidase subfamily. Heme b serves as cofactor. Expressed in aerial vegetative parts and reproductive organs. Expressed in roots, leaves, stems and flowers. Expressed in young leaves, internodes, blade ears, stems and anthers.

It localises to the cytoplasm. It catalyses the reaction L-ascorbate + H2O2 = L-dehydroascorbate + 2 H2O. With respect to regulation, inhibited by p-chloromercuriphenylsulfonic acid (CMPSA). Functionally, plays a key role in hydrogen peroxide removal. Plays an important role in plant growth and development by protecting the seedlings from abiotic stresses through scavenging reactive oxygen species. Required for pollen viability. The polypeptide is L-ascorbate peroxidase 2, cytosolic (Oryza sativa subsp. japonica (Rice)).